The sequence spans 125 residues: MSKSTLEQPEYVKERLESLAEVDRQLCSMLQEASQVAFTYGEVLRGNAMMKPQFQEHVSAFYSTLDNASGKLKKEIELLDENVGNRLLPINVNKKALGQDDDKLKEQMETLKEFLKTDNEETSTS.

Belongs to the Mediator complex subunit 11 family. As to quaternary structure, component of the Mediator complex.

The protein localises to the nucleus. Component of the Mediator complex, a coactivator involved in the regulated transcription of nearly all RNA polymerase II-dependent genes. Mediator functions as a bridge to convey information from gene-specific regulatory proteins to the basal RNA polymerase II transcription machinery. Mediator is recruited to promoters by direct interactions with regulatory proteins and serves as a scaffold for the assembly of a functional pre-initiation complex with RNA polymerase II and the general transcription factors. The polypeptide is Mediator of RNA polymerase II transcription subunit 11 (MED11) (Candida glabrata (strain ATCC 2001 / BCRC 20586 / JCM 3761 / NBRC 0622 / NRRL Y-65 / CBS 138) (Yeast)).